We begin with the raw amino-acid sequence, 417 residues long: Calreticulin (417 aa).

Residues 1 to 17 form the signal peptide; it reads MLLSVPLLLGLLGLAAA. Positions 18-197 are N-domain; it reads EPAVYFKEQF…NSQVESGSLE (180 aa). Q26 contributes to the Ca(2+) binding site. N6-acetyllysine is present on K48. K62 and K64 together coordinate Ca(2+). An N6-(2-hydroxyisobutyryl)lysine modification is found at K64. The cysteines at positions 105 and 137 are disulfide-linked. An alpha-D-glucoside is bound by residues Y109, K111, Y128, and D135. Position 159 is an N6-acetyllysine (K159). The 1-1 repeat unit spans residues 191–202; the sequence is VESGSLEDDWDF. Positions 191–255 are 4 X approximate repeats; that stretch reads VESGSLEDDW…DAKKPEDWDE (65 aa). Residues 193-277 form a disordered region; sequence SGSLEDDWDF…NPEYKGEWKP (85 aa). The P-domain stretch occupies residues 198 to 308; sequence DDWDFLPPKK…YSPDANIYAY (111 aa). The span at 207–251 shows a compositional bias: basic and acidic residues; that stretch reads KIKDPDAAKPEDWDERAKIDDPTDSKPEDWDKPEHIPDPDAKKPE. Residue K209 is modified to N6-acetyllysine. A run of 6 repeats spans residues 210–221, 227–238, 244–255, 259–269, 273–283, and 287–297. The interval 237 to 270 is interaction with PPIB; it reads DKPEHIPDPDAKKPEDWDEEMDGEWEPPVIQNPE. Residues 252 to 261 are compositionally biased toward acidic residues; it reads DWDEEMDGEW. Positions 259–297 are 3 X approximate repeats; it reads GEWEPPVIQNPEYKGEWKPRQIDNPDYKGTWIHPEIDNP. Residues 309–417 form a C-domain region; that stretch reads DSFAVLGLDL…TTPGQTKDEL (109 aa). D317 lines the an alpha-D-glucoside pocket. Residue D328 coordinates Ca(2+). The tract at residues 350 to 417 is disordered; that stretch reads TKASEKQMKD…TTPGQTKDEL (68 aa). Residues 352–379 are compositionally biased toward basic and acidic residues; sequence ASEKQMKDKQDEEQRLKEEEEDKKRKEE. The span at 380–408 shows a compositional bias: acidic residues; the sequence is EEAEDKEDEDDRDEDEEDEDEKEEDEEDT. Residues 414–417 carry the Prevents secretion from ER motif; that stretch reads KDEL.

Belongs to the calreticulin family. As to quaternary structure, monomer. Component of an EIF2 complex at least composed of CELF1/CUGBP1, CALR, CALR3, EIF2S1, EIF2S2, HSP90B1 and HSPA5. Interacts with PDIA3/ERp57 and SPACA9. Interacts with TRIM21. Interacts with NR3C1. Interacts with PPIB. Interacts (via P-domain) with PDIA5. Interacts with GABARAP. Interacts with CLCC1.

The protein resides in the endoplasmic reticulum lumen. It localises to the cytoplasm. The protein localises to the cytosol. Its subcellular location is the cytolytic granule. It is found in the secreted. The protein resides in the extracellular space. It localises to the extracellular matrix. The protein localises to the cell surface. Its subcellular location is the sarcoplasmic reticulum lumen. It is found in the cytoplasmic vesicle. The protein resides in the secretory vesicle. It localises to the cortical granule. Calcium-binding chaperone that promotes folding, oligomeric assembly and quality control in the endoplasmic reticulum (ER) via the calreticulin/calnexin cycle. This lectin interacts transiently with almost all of the monoglucosylated glycoproteins that are synthesized in the ER. Interacts with the DNA-binding domain of NR3C1 and mediates its nuclear export. Involved in maternal gene expression regulation. May participate in oocyte maturation via the regulation of calcium homeostasis. Present in the cortical granules of non-activated oocytes, is exocytosed during the cortical reaction in response to oocyte activation and might participate in the block to polyspermy. In Cricetulus griseus (Chinese hamster), this protein is Calreticulin (CALR).